A 422-amino-acid polypeptide reads, in one-letter code: Dihydrofolate synthase/folylpolyglutamate synthase (422 aa).

A 7,8-dihydropteroate-binding site is contributed by 29–31 (DLG). Residue 59-62 (GKGT) participates in ATP binding. Serine 83 lines the Mg(2+) pocket. 122-125 (TYFE) is a 7,8-dihydropteroate binding site. Glutamate 146 is a binding site for Mg(2+). 153-155 (LDA) contributes to the 7,8-dihydropteroate binding site. Histidine 173 is a binding site for Mg(2+). N6-carboxylysine is present on lysine 188. ATP is bound by residues asparagine 257, arginine 289, and aspartate 302.

The protein belongs to the folylpolyglutamate synthase family. As to quaternary structure, monomer. Mg(2+) serves as cofactor.

It carries out the reaction 7,8-dihydropteroate + L-glutamate + ATP = 7,8-dihydrofolate + ADP + phosphate + H(+). The catalysed reaction is (6S)-5,6,7,8-tetrahydrofolyl-(gamma-L-Glu)(n) + L-glutamate + ATP = (6S)-5,6,7,8-tetrahydrofolyl-(gamma-L-Glu)(n+1) + ADP + phosphate + H(+). It catalyses the reaction 10-formyltetrahydrofolyl-(gamma-L-Glu)(n) + L-glutamate + ATP = 10-formyltetrahydrofolyl-(gamma-L-Glu)(n+1) + ADP + phosphate + H(+). The enzyme catalyses (6R)-5,10-methylenetetrahydrofolyl-(gamma-L-Glu)(n) + L-glutamate + ATP = (6R)-5,10-methylenetetrahydrofolyl-(gamma-L-Glu)(n+1) + ADP + phosphate + H(+). Its pathway is cofactor biosynthesis; tetrahydrofolate biosynthesis; 7,8-dihydrofolate from 2-amino-4-hydroxy-6-hydroxymethyl-7,8-dihydropteridine diphosphate and 4-aminobenzoate: step 2/2. The protein operates within cofactor biosynthesis; tetrahydrofolylpolyglutamate biosynthesis. In terms of biological role, functions in two distinct reactions of the de novo folate biosynthetic pathway. Catalyzes the addition of a glutamate residue to dihydropteroate (7,8-dihydropteroate or H2Pte) to form dihydrofolate (7,8-dihydrofolate monoglutamate or H2Pte-Glu). Also catalyzes successive additions of L-glutamate to tetrahydrofolate or 10-formyltetrahydrofolate or 5,10-methylenetetrahydrofolate, leading to folylpolyglutamate derivatives. The polypeptide is Dihydrofolate synthase/folylpolyglutamate synthase (Escherichia coli (strain K12)).